Here is a 1612-residue protein sequence, read N- to C-terminus: Roundabout homolog 1 (1612 aa).

Positions methionine 1–glycine 19 are cleaved as a signal peptide. Residues serine 20–proline 858 lie on the Extracellular side of the membrane. Ig-like C2-type domains lie at proline 29–glutamate 125, aspartate 131–threonine 218, proline 223–threonine 307, proline 312–threonine 407, and proline 416–glutamate 502. An intrachain disulfide couples cysteine 50 to cysteine 108. Asparagine 121 carries N-linked (GlcNAc...) asparagine glycosylation. Cystine bridges form between cysteine 152–cysteine 201, cysteine 244–cysteine 291, and cysteine 333–cysteine 389. N-linked (GlcNAc...) asparagine glycosylation occurs at asparagine 424. Cysteine 437 and cysteine 486 are joined by a disulfide. 3 consecutive Fibronectin type-III domains span residues alanine 524–valine 618, valine 637–glutamate 734, and proline 739–histidine 835. N-linked (GlcNAc...) asparagine glycans are attached at residues asparagine 751, asparagine 781, and asparagine 788. Residues alanine 859–leucine 879 traverse the membrane as a helical segment. The Cytoplasmic portion of the chain corresponds to tyrosine 880–serine 1612. Position 901 is a phosphoserine (serine 901). Position 909 is a phosphothreonine (threonine 909). Phosphotyrosine is present on tyrosine 999. Serine 1016 is subject to Phosphoserine. Position 1034 is a phosphotyrosine (tyrosine 1034). Residues serine 1045 to proline 1068 are disordered. Tyrosine 1075 is modified (phosphotyrosine). Disordered regions lie at residues arginine 1088 to glutamate 1298, glutamate 1313 to phenylalanine 1358, and arginine 1381 to serine 1612. A compositionally biased stretch (polar residues) spans proline 1098–threonine 1107. The span at glycine 1108–glutamine 1124 shows a compositional bias: low complexity. Residues leucine 1147–histidine 1157 show a composition bias toward pro residues. At threonine 1201 the chain carries Phosphothreonine. Over residues tyrosine 1216–glutamate 1230 the composition is skewed to polar residues. Positions aspartate 1242 to arginine 1254 are enriched in basic and acidic residues. The segment covering valine 1257–proline 1268 has biased composition (pro residues). A Phosphoserine modification is found at serine 1258. The segment covering methionine 1283–methionine 1297 has biased composition (acidic residues). Residues serine 1345 to phenylalanine 1358 are compositionally biased toward low complexity. Over residues proline 1399–serine 1412 the composition is skewed to polar residues. Over residues arginine 1420–histidine 1431 the composition is skewed to basic residues. Pro residues predominate over residues leucine 1441–isoleucine 1451. 2 stretches are compositionally biased toward basic and acidic residues: residues alanine 1477–threonine 1502 and aspartate 1510–proline 1534. Positions phenylalanine 1553–proline 1562 are enriched in polar residues. The span at serine 1563 to serine 1575 shows a compositional bias: low complexity. Over residues asparagine 1603–serine 1612 the composition is skewed to acidic residues.

Belongs to the immunoglobulin superfamily. ROBO family. Homodimer. Dimerization is mediated by the extracellular domain and is independent of SLIT liganding. Interacts with SLIT1 Interacts with SLIT2. Interacts with FLRT3. Interacts with MYO9B (via Rho-GAP domain). Ubiquitinated. May be deubiquitinated by USP33. In terms of tissue distribution, detected in embryonic thalamus neurons (at protein level). Expressed in embryonal spinal cord. Expressed in embryonal lung, and in adult lung bronchial epithelial cells of large proximal airways.

The protein resides in the cell membrane. It is found in the cell projection. It localises to the axon. Its subcellular location is the endoplasmic reticulum-Golgi intermediate compartment membrane. In terms of biological role, receptor for SLIT1 and SLIT2 that mediates cellular responses to molecular guidance cues in cellular migration, including axonal navigation at the ventral midline of the neural tube and projection of axons to different regions during neuronal development. Interaction with the intracellular domain of FLRT3 mediates axon attraction towards cells expressing NTN1. In axon growth cones, the silencing of the attractive effect of NTN1 by SLIT2 may require the formation of a ROBO1-DCC complex. Plays a role in the regulation of cell migration via its interaction with MYO9B; inhibits MYO9B-mediated stimulation of RHOA GTPase activity, and thereby leads to increased levels of active, GTP-bound RHOA. May be required for lung development. The polypeptide is Roundabout homolog 1 (Robo1) (Mus musculus (Mouse)).